The primary structure comprises 437 residues: GTPase Era, mitochondrial (437 aa).

The transit peptide at 1-43 directs the protein to the mitochondrion; it reads MAASSWRGAVLLRTVSGLWQAGPDAAREWMTRLPSLLGFQQRC. The Era-type G domain maps to 112 to 330; sequence RVLRVVLLGA…QYLLAQARPG (219 aa). The interval 120 to 127 is G1; it reads GAPNAGKS. 120–127 serves as a coordination point for GTP; sequence GAPNAGKS. A G2 region spans residues 146 to 150; the sequence is HTTRS. Residues 167–170 are G3; sequence DTPG. 167–171 lines the GTP pocket; sequence DTPGL. Ser173 is modified (phosphoserine). GTP is bound at residue 236–239; that stretch reads NKVD. The segment at 236 to 239 is G4; it reads NKVD. A disordered region spans residues 264 to 296; it reads LKTKQALRSRPDTHCPSPAAQGPNPQPVRDPQQ. The G5 stretch occupies residues 308 to 310; that stretch reads LSA. The KH type-2 domain occupies 360-437; the sequence is LPEEVPYNVQ…QLRLSVKLLK (78 aa).

It belongs to the TRAFAC class TrmE-Era-EngA-EngB-Septin-like GTPase superfamily. Era GTPase family.

It is found in the mitochondrion matrix. It localises to the mitochondrion inner membrane. Probable GTPase that plays a role in the mitochondrial ribosomal small subunit assembly. Specifically binds the 12S mitochondrial rRNA (12S mt-rRNA) to a 33 nucleotide section delineating the 3' terminal stem-loop region. May act as a chaperone that protects the 12S mt-rRNA on the 28S mitoribosomal subunit during ribosomal small subunit assembly. The sequence is that of GTPase Era, mitochondrial (ERAL1) from Bos taurus (Bovine).